Reading from the N-terminus, the 258-residue chain is F-box/LRR-repeat protein 25 (258 aa).

Positions 27 to 76 (SDSISNLPDEILHHILSFIPETNLVIRTSVLSKRWRHVWSKTPHLSFEWL) constitute an F-box domain. LRR repeat units lie at residues 101–130 (CTSYSYEAGHVHSSIEFAMSHNVDNLSLAF), 136–161 (CNKFPDFFYTSSSLKRVELRSASLTP), 177–202 (RCNLSDKSFLKILSGCPILESLSLKF), and 224–249 (RRSCFREPMQSMQIVAPHIHYLRLRD).

The polypeptide is F-box/LRR-repeat protein 25 (FBL25) (Arabidopsis thaliana (Mouse-ear cress)).